Here is an 887-residue protein sequence, read N- to C-terminus: Dystrophin-like protein 1 (887 aa).

Residues 30 to 197 enclose the PID domain; sequence YQHGIHFEAK…KISMQSEDEA (168 aa). Composition is skewed to basic and acidic residues over residues 176–186 and 205–216; these read MQEKHEDEAAK and IEERGGREEDSR. Disordered regions lie at residues 176–254, 506–606, 641–753, 804–839, and 853–887; these read MQEK…GTAI, EIHH…QYER, QFDM…KNTA, IAEEPEPSEMDPNRNNLPSSTNSSMKRRGFLPPPNT, and NVDRSKLPETSLLTRLTRQAQGDNSLGNLPNGYPQ. Positions 242 to 254 are enriched in polar residues; sequence KPSTTSSSGGTAI. Residues 434–506 are a coiled coil; that stretch reads QLMRSQLDQA…QMLETKITSE (73 aa). Positions 510 to 519 are enriched in low complexity; sequence SSSQPPQHQP. Over residues 573–588 the composition is skewed to basic and acidic residues; that stretch reads KESKERRKDEGTRTEP. A compositionally biased stretch (polar residues) spans 597 to 606; sequence DYSSSDQYER. 2 stretches are compositionally biased toward polar residues: residues 816–827 and 863–887; these read NRNNLPSSTNSS and SLLTRLTRQAQGDNSLGNLPNGYPQ.

As to quaternary structure, component of the dystrophin glycoprotein complex (DGC). Interacts with zyx-1. In terms of tissue distribution, expressed in muscles of the head, body wall and vulva. In some animals, weaker expression is observed in the intestinal muscles (at protein level). Isoform a is expressed in lateral neurons SDQL and SDQR.

Together with dys-1 and hlh-1, participates in a common muscular function. This chain is Dystrophin-like protein 1, found in Caenorhabditis elegans.